The following is a 24-amino-acid chain: FMGGLIKAATKALPAAFCAITKKC.

C18 and C24 are oxidised to a cystine.

As to expression, expressed by the skin glands.

It is found in the secreted. In terms of biological role, has antibacterial activity against the Gram-positive bacterium S.aureus ATCC 25923 and the Gram-negative bacterium E.coli ATCC 25726. This chain is Brevinin-1PTb, found in Pulchrana picturata (Malaysian fire frog).